Consider the following 396-residue polypeptide: Ribosomal RNA large subunit methyltransferase I (396 aa).

The PUA domain occupies 2–79; the sequence is SVFIYLVKGR…KEETVDLDFF (78 aa).

The protein belongs to the methyltransferase superfamily. RlmI family.

The protein localises to the cytoplasm. It carries out the reaction cytidine(1962) in 23S rRNA + S-adenosyl-L-methionine = 5-methylcytidine(1962) in 23S rRNA + S-adenosyl-L-homocysteine + H(+). In terms of biological role, specifically methylates the cytosine at position 1962 (m5C1962) of 23S rRNA. The chain is Ribosomal RNA large subunit methyltransferase I from Aeromonas salmonicida (strain A449).